A 336-amino-acid chain; its full sequence is Ketol-acid reductoisomerase (NADP(+)) (336 aa).

Positions Met1–Thr182 constitute a KARI N-terminal Rossmann domain. Residues Phe25 to Gln28, Arg48, Ser51, Ser53, and Asp83 to Gln86 contribute to the NADP(+) site. His108 is an active-site residue. Gly134 is a binding site for NADP(+). The 146-residue stretch at Thr183 to Leu328 folds into the KARI C-terminal knotted domain. The Mg(2+) site is built by Asp191, Glu195, Glu227, and Glu231. Residue Ser252 coordinates substrate.

Belongs to the ketol-acid reductoisomerase family. Mg(2+) is required as a cofactor.

It carries out the reaction (2R)-2,3-dihydroxy-3-methylbutanoate + NADP(+) = (2S)-2-acetolactate + NADPH + H(+). The catalysed reaction is (2R,3R)-2,3-dihydroxy-3-methylpentanoate + NADP(+) = (S)-2-ethyl-2-hydroxy-3-oxobutanoate + NADPH + H(+). It functions in the pathway amino-acid biosynthesis; L-isoleucine biosynthesis; L-isoleucine from 2-oxobutanoate: step 2/4. It participates in amino-acid biosynthesis; L-valine biosynthesis; L-valine from pyruvate: step 2/4. Its function is as follows. Involved in the biosynthesis of branched-chain amino acids (BCAA). Catalyzes an alkyl-migration followed by a ketol-acid reduction of (S)-2-acetolactate (S2AL) to yield (R)-2,3-dihydroxy-isovalerate. In the isomerase reaction, S2AL is rearranged via a Mg-dependent methyl migration to produce 3-hydroxy-3-methyl-2-ketobutyrate (HMKB). In the reductase reaction, this 2-ketoacid undergoes a metal-dependent reduction by NADPH to yield (R)-2,3-dihydroxy-isovalerate. This is Ketol-acid reductoisomerase (NADP(+)) from Thermotoga neapolitana (strain ATCC 49049 / DSM 4359 / NBRC 107923 / NS-E).